The primary structure comprises 248 residues: Triosephosphate isomerase (248 aa).

Substrate is bound at residue 9-11 (NWK). The active-site Electrophile is the His93. Glu163 (proton acceptor) is an active-site residue. Substrate contacts are provided by residues Gly169, Ser208, and 229–230 (GG).

This sequence belongs to the triosephosphate isomerase family. Homodimer.

It localises to the cytoplasm. The catalysed reaction is D-glyceraldehyde 3-phosphate = dihydroxyacetone phosphate. The protein operates within carbohydrate biosynthesis; gluconeogenesis. It functions in the pathway carbohydrate degradation; glycolysis; D-glyceraldehyde 3-phosphate from glycerone phosphate: step 1/1. In terms of biological role, involved in the gluconeogenesis. Catalyzes stereospecifically the conversion of dihydroxyacetone phosphate (DHAP) to D-glyceraldehyde-3-phosphate (G3P). In Jannaschia sp. (strain CCS1), this protein is Triosephosphate isomerase.